The following is a 223-amino-acid chain: Deoxyribose-phosphate aldolase (223 aa).

D89 acts as the Proton donor/acceptor in catalysis. K152 (schiff-base intermediate with acetaldehyde) is an active-site residue. Residue K181 is the Proton donor/acceptor of the active site.

The protein belongs to the DeoC/FbaB aldolase family. DeoC type 1 subfamily.

It localises to the cytoplasm. The catalysed reaction is 2-deoxy-D-ribose 5-phosphate = D-glyceraldehyde 3-phosphate + acetaldehyde. The protein operates within carbohydrate degradation; 2-deoxy-D-ribose 1-phosphate degradation; D-glyceraldehyde 3-phosphate and acetaldehyde from 2-deoxy-alpha-D-ribose 1-phosphate: step 2/2. Its function is as follows. Catalyzes a reversible aldol reaction between acetaldehyde and D-glyceraldehyde 3-phosphate to generate 2-deoxy-D-ribose 5-phosphate. This is Deoxyribose-phosphate aldolase from Bacillus cereus (strain Q1).